We begin with the raw amino-acid sequence, 148 residues long: MTLTKHEQDILLKELGPHVDTPAHIVETGLGAYHALFTAHPQYIIHFSRLEGHTIENVMQSEGIKHYARTLTEAIVHMLKEISNDAEVKKIAAQYGKDHTSRKVTKDEFMSGEPIFTKYFQNLVKDAEGKAAVEKFLKHVFPMMAAEI.

The Globin domain maps to 2–148 (TLTKHEQDIL…HVFPMMAAEI (147 aa)). Histidine 99 lines the heme pocket.

The protein belongs to the globin family. Monomer.

In terms of biological role, oxygen binding protein. This chain is Globin-3, found in Paramphistomum epiclitum.